A 311-amino-acid chain; its full sequence is MSYQDLKECKIITAFITPFHEDGSINFDAIPALIEHLLDHHTDGILLAGTTAESPTLTHDEELELFAAVQKIVNGRVPLIAGVGTNDTRDSIEFVKEVAEFGGFAAGLAIVPYYNKPSQEGMYQHFKAIADASDLPIIIYNIPGRVVVELTPETMLRLADHPNIIGVKECTSLANMAYLIEHKPEEFLVYTGEDGDAFHAMNLGADGVISVASHTNGDEMHEMFIAIAESDVKKAAAIQRKFIPKVNALFSYPSPAPVKAVLNYMGFEAGPTRLPLVPAPEEDAKRIIKVVVDGDYEATKATVTGVLRPDY.

Pyruvate is bound at residue Thr51. Tyr140 serves as the catalytic Proton donor/acceptor. Residue Lys168 is the Schiff-base intermediate with substrate of the active site. Ile209 is a pyruvate binding site.

It belongs to the DapA family. In terms of assembly, homotetramer; dimer of dimers.

The protein resides in the cytoplasm. The enzyme catalyses L-aspartate 4-semialdehyde + pyruvate = (2S,4S)-4-hydroxy-2,3,4,5-tetrahydrodipicolinate + H2O + H(+). It participates in amino-acid biosynthesis; L-lysine biosynthesis via DAP pathway; (S)-tetrahydrodipicolinate from L-aspartate: step 3/4. In terms of biological role, catalyzes the condensation of (S)-aspartate-beta-semialdehyde [(S)-ASA] and pyruvate to 4-hydroxy-tetrahydrodipicolinate (HTPA). This Streptococcus pneumoniae (strain ATCC BAA-255 / R6) protein is 4-hydroxy-tetrahydrodipicolinate synthase.